A 437-amino-acid chain; its full sequence is Aminopeptidase W (437 aa).

Catalysis depends on residues Cys-70, His-361, and Asn-382.

Belongs to the peptidase C1 family.

The protein resides in the cytoplasm. The chain is Aminopeptidase W (pepW) from Lactobacillus delbrueckii subsp. lactis.